Here is a 141-residue protein sequence, read N- to C-terminus: Large ribosomal subunit protein uL11 (141 aa).

The protein belongs to the universal ribosomal protein uL11 family. In terms of assembly, part of the ribosomal stalk of the 50S ribosomal subunit. Interacts with L10 and the large rRNA to form the base of the stalk. L10 forms an elongated spine to which L12 dimers bind in a sequential fashion forming a multimeric L10(L12)X complex. In terms of processing, one or more lysine residues are methylated.

Functionally, forms part of the ribosomal stalk which helps the ribosome interact with GTP-bound translation factors. The polypeptide is Large ribosomal subunit protein uL11 (Microcystis aeruginosa (strain NIES-843 / IAM M-2473)).